Consider the following 169-residue polypeptide: Endoribonuclease YbeY (169 aa).

H128, H132, and H138 together coordinate Zn(2+).

This sequence belongs to the endoribonuclease YbeY family. Zn(2+) serves as cofactor.

It is found in the cytoplasm. Its function is as follows. Single strand-specific metallo-endoribonuclease involved in late-stage 70S ribosome quality control and in maturation of the 3' terminus of the 16S rRNA. The polypeptide is Endoribonuclease YbeY (Cyanothece sp. (strain PCC 7425 / ATCC 29141)).